A 408-amino-acid polypeptide reads, in one-letter code: Secreted effector protein SseJ (408 aa).

Residue Ser-151 is the Nucleophile of the active site. Active-site residues include Asp-381 and His-384.

It belongs to the 'GDSL' lipolytic enzyme family. As to quaternary structure, interacts with RhoA and indirectly with SifA.

The protein resides in the secreted. The protein localises to the host cytoplasm. Its function is as follows. Effector proteins function to alter host cell physiology and promote bacterial survival in host tissues. This protein is required for endosomal tubulation and negatively regulates the formation of Salmonella-induced filaments (Sifs) in epithelial cells. Has both deacylase and esterification activities in vitro, but esterification is probably the dominant activity in host cells. Significantly contributes to cholesterol esterification, which reduces cellular cholesterol in cells and abrogates the ability of SifA to associate with cholesterol and LAMP-1 vesicles. The polypeptide is Secreted effector protein SseJ (sseJ) (Salmonella typhimurium (strain LT2 / SGSC1412 / ATCC 700720)).